Consider the following 310-residue polypeptide: Aspartate carbamoyltransferase catalytic subunit 2 (310 aa).

R55 and T56 together coordinate carbamoyl phosphate. Position 85 (K85) interacts with L-aspartate. Carbamoyl phosphate-binding residues include R106, H134, and Q137. L-aspartate is bound by residues R167 and R228. Residues L266 and P267 each contribute to the carbamoyl phosphate site.

The protein belongs to the aspartate/ornithine carbamoyltransferase superfamily. ATCase family. In terms of assembly, heterododecamer (2C3:3R2) of six catalytic PyrB chains organized as two trimers (C3), and six regulatory PyrI chains organized as three dimers (R2).

The enzyme catalyses carbamoyl phosphate + L-aspartate = N-carbamoyl-L-aspartate + phosphate + H(+). Its pathway is pyrimidine metabolism; UMP biosynthesis via de novo pathway; (S)-dihydroorotate from bicarbonate: step 2/3. Catalyzes the condensation of carbamoyl phosphate and aspartate to form carbamoyl aspartate and inorganic phosphate, the committed step in the de novo pyrimidine nucleotide biosynthesis pathway. This is Aspartate carbamoyltransferase catalytic subunit 2 from Shewanella halifaxensis (strain HAW-EB4).